Here is a 204-residue protein sequence, read N- to C-terminus: MVSDGGGQTDNNAEGGNLRIALTKNAFNPNQSTTVDIPYKIENRSVGNNKEQKTLVFDFSGLNPYEYNMIVGALFTDSSFINDAYAPIQSTFQRQLKEFLQVKYENQVGANGSFDLFKPRSLSSQQLVQGERSLDGFTVELNANGGSFNFLTHVDPLVAGLTVAAIASVVVAGAVTYLVVRRYRKRNEFVDKIFASNIRAKQWR.

Residues 160–180 (GLTVAAIASVVVAGAVTYLVV) form a helical membrane-spanning segment.

To M.pneumoniae MPN_373 C-terminal region.

The protein resides in the cell membrane. This is an uncharacterized protein from Mycoplasma pneumoniae (strain ATCC 29342 / M129 / Subtype 1) (Mycoplasmoides pneumoniae).